The sequence spans 322 residues: Transaldolase (322 aa).

Residue lysine 132 is the Schiff-base intermediate with substrate of the active site. Phosphoserine is present on residues serine 268 and serine 269.

This sequence belongs to the transaldolase family. Type 1 subfamily. As to quaternary structure, homodimer.

It catalyses the reaction D-sedoheptulose 7-phosphate + D-glyceraldehyde 3-phosphate = D-erythrose 4-phosphate + beta-D-fructose 6-phosphate. Its pathway is carbohydrate degradation; pentose phosphate pathway; D-glyceraldehyde 3-phosphate and beta-D-fructose 6-phosphate from D-ribose 5-phosphate and D-xylulose 5-phosphate (non-oxidative stage): step 2/3. Its function is as follows. Transaldolase is important for the balance of metabolites in the pentose-phosphate pathway. In Schizosaccharomyces pombe (strain 972 / ATCC 24843) (Fission yeast), this protein is Transaldolase (tal1).